We begin with the raw amino-acid sequence, 781 residues long: ATP-dependent RNA helicase rok1 (781 aa).

2 disordered regions span residues 7–108 (LSRG…KPKL) and 134–177 (QDEA…IYPQ). Over residues 48-57 (KRGKKRKRKG) the composition is skewed to basic residues. Residues 66 to 75 (SGDEDDDASD) are compositionally biased toward acidic residues. Basic and acidic residues-rich tracts occupy residues 84–108 (TPEE…KPKL) and 139–173 (TEEK…DKKQ). A Q motif motif is present at residues 184–212 (ELKYTYGIHPVLADNITRQGFRVPTEVQM). One can recognise a Helicase ATP-binding domain in the interval 233–487 (DVKVEKGIDF…TKHIDKRAKR (255 aa)). 246–253 (APTGSGKT) lines the ATP pocket. The interval 323–386 (ESNEQEETEQ…SRAKGDQKFK (64 aa)) is disordered. Over residues 339-369 (QDSDSDSEAESEPEEVMKIDEEEEEEEESDS) the composition is skewed to acidic residues. A compositionally biased stretch (basic and acidic residues) spans 370 to 386 (DAEKKTESRAKGDQKFK). The short motif at 434 to 437 (DEAD) is the DEAD box element. The region spanning 527–689 (ALRQLLHPVS…GKDIDEKDTV (163 aa)) is the Helicase C-terminal domain. The interval 718–781 (RGVESRRTGG…KAEEEWTGLD (64 aa)) is disordered. Positions 736–752 (SWERRRENNRREAIEAS) are enriched in basic and acidic residues.

The protein belongs to the DEAD box helicase family. DDX52/ROK1 subfamily. Interacts with the U3 snoRNA and is associated with the 90S and 40S pre-ribosomes.

It is found in the nucleus. It localises to the nucleolus. It catalyses the reaction ATP + H2O = ADP + phosphate + H(+). Its function is as follows. ATP-dependent RNA helicase involved in 40S ribosomal subunit biogenesis. Required for the processing and cleavage of 35S pre-rRNA at sites A0, A1, and A2, leading to mature 18S rRNA. The sequence is that of ATP-dependent RNA helicase rok1 (drh-16) from Neurospora crassa (strain ATCC 24698 / 74-OR23-1A / CBS 708.71 / DSM 1257 / FGSC 987).